Consider the following 192-residue polypeptide: tRNA (cytidine(56)-2'-O)-methyltransferase (192 aa).

Residues L84 and 112 to 116 contribute to the S-adenosyl-L-methionine site; that span reads GGEKV.

The protein belongs to the aTrm56 family. In terms of assembly, homodimer.

Its subcellular location is the cytoplasm. The enzyme catalyses cytidine(56) in tRNA + S-adenosyl-L-methionine = 2'-O-methylcytidine(56) in tRNA + S-adenosyl-L-homocysteine + H(+). Specifically catalyzes the AdoMet-dependent 2'-O-ribose methylation of cytidine at position 56 in tRNAs. The protein is tRNA (cytidine(56)-2'-O)-methyltransferase of Halobacterium salinarum (strain ATCC 700922 / JCM 11081 / NRC-1) (Halobacterium halobium).